A 289-amino-acid chain; its full sequence is 4-hydroxy-3-methylbut-2-enyl diphosphate reductase (289 aa).

A [4Fe-4S] cluster-binding site is contributed by Cys12. The (2E)-4-hydroxy-3-methylbut-2-enyl diphosphate site is built by His41 and His84. The dimethylallyl diphosphate site is built by His41 and His84. Isopentenyl diphosphate contacts are provided by His41 and His84. Cys106 is a binding site for [4Fe-4S] cluster. His134 contributes to the (2E)-4-hydroxy-3-methylbut-2-enyl diphosphate binding site. Dimethylallyl diphosphate is bound at residue His134. His134 lines the isopentenyl diphosphate pocket. The active-site Proton donor is the Glu136. Residue Ser172 coordinates (2E)-4-hydroxy-3-methylbut-2-enyl diphosphate. [4Fe-4S] cluster is bound at residue Cys200. The (2E)-4-hydroxy-3-methylbut-2-enyl diphosphate site is built by Ser229, Asn231, and Ser273. The dimethylallyl diphosphate site is built by Ser229, Asn231, and Ser273. Isopentenyl diphosphate contacts are provided by Ser229, Asn231, and Ser273.

It belongs to the IspH family. It depends on [4Fe-4S] cluster as a cofactor.

The catalysed reaction is isopentenyl diphosphate + 2 oxidized [2Fe-2S]-[ferredoxin] + H2O = (2E)-4-hydroxy-3-methylbut-2-enyl diphosphate + 2 reduced [2Fe-2S]-[ferredoxin] + 2 H(+). The enzyme catalyses dimethylallyl diphosphate + 2 oxidized [2Fe-2S]-[ferredoxin] + H2O = (2E)-4-hydroxy-3-methylbut-2-enyl diphosphate + 2 reduced [2Fe-2S]-[ferredoxin] + 2 H(+). It functions in the pathway isoprenoid biosynthesis; dimethylallyl diphosphate biosynthesis; dimethylallyl diphosphate from (2E)-4-hydroxy-3-methylbutenyl diphosphate: step 1/1. It participates in isoprenoid biosynthesis; isopentenyl diphosphate biosynthesis via DXP pathway; isopentenyl diphosphate from 1-deoxy-D-xylulose 5-phosphate: step 6/6. Catalyzes the conversion of 1-hydroxy-2-methyl-2-(E)-butenyl 4-diphosphate (HMBPP) into a mixture of isopentenyl diphosphate (IPP) and dimethylallyl diphosphate (DMAPP). Acts in the terminal step of the DOXP/MEP pathway for isoprenoid precursor biosynthesis. The polypeptide is 4-hydroxy-3-methylbut-2-enyl diphosphate reductase (Opitutus terrae (strain DSM 11246 / JCM 15787 / PB90-1)).